A 126-amino-acid chain; its full sequence is Large ribosomal subunit protein bL19 (126 aa).

This sequence belongs to the bacterial ribosomal protein bL19 family.

This protein is located at the 30S-50S ribosomal subunit interface and may play a role in the structure and function of the aminoacyl-tRNA binding site. The protein is Large ribosomal subunit protein bL19 of Gluconacetobacter diazotrophicus (strain ATCC 49037 / DSM 5601 / CCUG 37298 / CIP 103539 / LMG 7603 / PAl5).